The following is a 121-amino-acid chain: Large ribosomal subunit protein uL14 (121 aa).

This sequence belongs to the universal ribosomal protein uL14 family. As to quaternary structure, part of the 50S ribosomal subunit. Forms a cluster with proteins L3 and L19. In the 70S ribosome, L14 and L19 interact and together make contacts with the 16S rRNA in bridges B5 and B8.

Binds to 23S rRNA. Forms part of two intersubunit bridges in the 70S ribosome. In Prochlorococcus marinus (strain NATL1A), this protein is Large ribosomal subunit protein uL14.